We begin with the raw amino-acid sequence, 445 residues long: UPF0761 membrane protein Mlg_0521 (445 aa).

A run of 6 helical transmembrane segments spans residues 56–76 (LLAL…FPVF), 112–132 (GLTV…MAAI), 152–172 (FMVY…SLGI), 195–215 (LLAG…YAAV), 225–245 (ALLG…GFGW), and 259–279 (ALAA…VVLV).

This sequence belongs to the UPF0761 family.

The protein localises to the cell inner membrane. In Alkalilimnicola ehrlichii (strain ATCC BAA-1101 / DSM 17681 / MLHE-1), this protein is UPF0761 membrane protein Mlg_0521.